The following is a 442-amino-acid chain: Limonoid 1-O-acetyltransferse (442 aa).

Active-site proton acceptor residues include histidine 155 and aspartate 381.

It belongs to the plant acyltransferase family. Monomer.

The catalysed reaction is (1S)-1-hydroxy-luvungin A + acetyl-CoA = (1S)-1-acetoxy-luvungin A + CoA. The protein operates within secondary metabolite biosynthesis; terpenoid biosynthesis. Its function is as follows. Acetyltransferase involved in the biosynthesis of limonoids triterpene natural products such as limonin, a compound with insecticidal activity responsible for the bitter taste in citrus. Catalyzes the formation of (1S)-1-acetoxy-luvungin A from (1S)-1-hydroxy-luvungin A. This Citrus sinensis (Sweet orange) protein is Limonoid 1-O-acetyltransferse.